A 381-amino-acid polypeptide reads, in one-letter code: L-lactate dehydrogenase (381 aa).

An FMN hydroxy acid dehydrogenase domain is found at 1–380 (MIISASTDYR…SADSLVRELG (380 aa)). Tyrosine 24 lines the substrate pocket. FMN-binding residues include serine 106 and glutamine 127. Tyrosine 129 is a substrate binding site. Threonine 155 serves as a coordination point for FMN. Arginine 164 is a substrate binding site. FMN is bound at residue lysine 251. Histidine 275 (proton acceptor) is an active-site residue. Residue arginine 278 participates in substrate binding. 306–330 (DSGIRTGLDVVRMIALGADSVLLGR) contacts FMN.

It belongs to the FMN-dependent alpha-hydroxy acid dehydrogenase family. Homotetramer. It depends on FMN as a cofactor.

It is found in the cell inner membrane. It catalyses the reaction (S)-lactate + A = pyruvate + AH2. Functionally, catalyzes the conversion of L-lactate to pyruvate. Is coupled to the respiratory chain. In Pseudomonas aeruginosa (strain UCBPP-PA14), this protein is L-lactate dehydrogenase.